The sequence spans 208 residues: FMN-dependent NADH:quinone oxidoreductase (208 aa).

Residues 17–19 (SNS), 99–102 (MWNL), and 143–146 (SRGG) contribute to the FMN site.

The protein belongs to the azoreductase type 1 family. As to quaternary structure, homodimer. It depends on FMN as a cofactor.

It carries out the reaction 2 a quinone + NADH + H(+) = 2 a 1,4-benzosemiquinone + NAD(+). The catalysed reaction is N,N-dimethyl-1,4-phenylenediamine + anthranilate + 2 NAD(+) = 2-(4-dimethylaminophenyl)diazenylbenzoate + 2 NADH + 2 H(+). Quinone reductase that provides resistance to thiol-specific stress caused by electrophilic quinones. Its function is as follows. Also exhibits azoreductase activity. Catalyzes the reductive cleavage of the azo bond in aromatic azo compounds to the corresponding amines. This Staphylococcus haemolyticus (strain JCSC1435) protein is FMN-dependent NADH:quinone oxidoreductase.